The sequence spans 393 residues: Acetate kinase (393 aa).

Position 7 (Asn-7) interacts with Mg(2+). ATP is bound at residue Lys-14. Arg-90 is a binding site for substrate. Residue Asp-147 is the Proton donor/acceptor of the active site. ATP contacts are provided by residues 205–209 (HLGNG), 280–282 (DFR), and 328–332 (GIGEN). Residue Glu-380 coordinates Mg(2+).

The protein belongs to the acetokinase family. Homodimer. Mg(2+) serves as cofactor. It depends on Mn(2+) as a cofactor.

It is found in the cytoplasm. It catalyses the reaction acetate + ATP = acetyl phosphate + ADP. It participates in metabolic intermediate biosynthesis; acetyl-CoA biosynthesis; acetyl-CoA from acetate: step 1/2. In terms of biological role, catalyzes the formation of acetyl phosphate from acetate and ATP. Can also catalyze the reverse reaction. The protein is Acetate kinase of Finegoldia magna (strain ATCC 29328 / DSM 20472 / WAL 2508) (Peptostreptococcus magnus).